A 204-amino-acid polypeptide reads, in one-letter code: Somatotropin (204 aa).

Residues 1 to 17 form the signal peptide; it reads MNSVVLQLSVVCLGVSS. Residue Q18 is modified to Pyrrolidone carboxylic acid. Residue H36 coordinates Zn(2+). An intrachain disulfide couples C69 to C177. E186 is a binding site for Zn(2+). C194 and C202 form a disulfide bridge.

It belongs to the somatotropin/prolactin family.

The protein localises to the secreted. Functionally, growth hormone plays an important role in growth control and involved in the regulation of several anabolic processes. This Oreochromis mossambicus (Mozambique tilapia) protein is Somatotropin (gh).